The primary structure comprises 477 residues: Aspartyl/glutamyl-tRNA(Asn/Gln) amidotransferase subunit B (477 aa).

It belongs to the GatB/GatE family. GatB subfamily. In terms of assembly, heterotrimer of A, B and C subunits.

The catalysed reaction is L-glutamyl-tRNA(Gln) + L-glutamine + ATP + H2O = L-glutaminyl-tRNA(Gln) + L-glutamate + ADP + phosphate + H(+). It catalyses the reaction L-aspartyl-tRNA(Asn) + L-glutamine + ATP + H2O = L-asparaginyl-tRNA(Asn) + L-glutamate + ADP + phosphate + 2 H(+). In terms of biological role, allows the formation of correctly charged Asn-tRNA(Asn) or Gln-tRNA(Gln) through the transamidation of misacylated Asp-tRNA(Asn) or Glu-tRNA(Gln) in organisms which lack either or both of asparaginyl-tRNA or glutaminyl-tRNA synthetases. The reaction takes place in the presence of glutamine and ATP through an activated phospho-Asp-tRNA(Asn) or phospho-Glu-tRNA(Gln). The chain is Aspartyl/glutamyl-tRNA(Asn/Gln) amidotransferase subunit B from Legionella pneumophila (strain Corby).